The chain runs to 80 residues: Exodeoxyribonuclease 7 small subunit (80 aa).

It belongs to the XseB family. As to quaternary structure, heterooligomer composed of large and small subunits.

The protein resides in the cytoplasm. It carries out the reaction Exonucleolytic cleavage in either 5'- to 3'- or 3'- to 5'-direction to yield nucleoside 5'-phosphates.. Its function is as follows. Bidirectionally degrades single-stranded DNA into large acid-insoluble oligonucleotides, which are then degraded further into small acid-soluble oligonucleotides. In Pseudomonas putida (strain GB-1), this protein is Exodeoxyribonuclease 7 small subunit.